A 394-amino-acid polypeptide reads, in one-letter code: Phosphoglycerate kinase (394 aa).

Residues 21-23, arginine 36, 59-62, arginine 118, and arginine 151 contribute to the substrate site; these read DFN and HLGR. Position 183 is a phosphoserine (serine 183). Residues lysine 201 and glycine 292 each contribute to the ATP site. A Phosphothreonine modification is found at threonine 299. Residues glutamate 323 and 350–353 each bind ATP; that span reads GGDS.

This sequence belongs to the phosphoglycerate kinase family. In terms of assembly, monomer.

The protein resides in the cytoplasm. It carries out the reaction (2R)-3-phosphoglycerate + ATP = (2R)-3-phospho-glyceroyl phosphate + ADP. It participates in carbohydrate degradation; glycolysis; pyruvate from D-glyceraldehyde 3-phosphate: step 2/5. The chain is Phosphoglycerate kinase from Bacillus cereus (strain Q1).